The chain runs to 314 residues: MSSTAAFCLLSTLGGYLVTSFLLLKYPALLHQRKKQRFLSRHISHRGGAGENLENTMAAFQHAVTIGTDMLELDCHITKDEQVVVSHDANLKRSTGVNVNVSDLKYCELPPYLCKLDVPFQRACKCEGKDTRIPLLKEVFEAFPETPINIDIKVNNNVLIKKVSELVKQYKREHLTVWGNANSEIVDKCYKENSDIPILFSLQRVLLILGLFFTGLLPFVPIREQFFEIPMPSIILKLKEPHTISKGHKFLIWLSDTLLMRKALFDHLTARGIQVYVWVLNEEYEYKRAFDLGATGVMTDYPTKLKDFLNNFSA.

Over 1–3 (MSS) the chain is Extracellular. A helical membrane pass occupies residues 4 to 24 (TAAFCLLSTLGGYLVTSFLLL). Over 25 to 195 (KYPALLHQRK…VDKCYKENSD (171 aa)) the chain is Cytoplasmic. The GP-PDE domain occupies 40-309 (SRHISHRGGA…DYPTKLKDFL (270 aa)). 3 residues coordinate a divalent metal cation: E72, D74, and H87. The helical transmembrane segment at 196–216 (IPILFSLQRVLLILGLFFTGL) threads the bilayer. Topologically, residues 217–314 (LPFVPIREQF…LKDFLNNFSA (98 aa)) are extracellular.

The protein belongs to the glycerophosphoryl diester phosphodiesterase family. Widely expressed.

It is found in the cytoplasm. It localises to the membrane. Its subcellular location is the perinuclear region. The protein localises to the endoplasmic reticulum. It carries out the reaction 1-hexadecanoyl-sn-glycero-3-phosphocholine + H2O = 1-hexadecanoyl-sn-glycero-3-phosphate + choline + H(+). It catalyses the reaction 1-hexadecanoyl-sn-glycero-3-phosphoethanolamine + H2O = 1-hexadecanoyl-sn-glycero-3-phosphate + ethanolamine + H(+). The enzyme catalyses N-hexadecanoyl-sn-glycero-3-phosphoethanolamine + H2O = N-hexadecanoylethanolamine + sn-glycerol 3-phosphate + H(+). The catalysed reaction is N-(5Z,8Z,11Z,14Z-eicosatetraenoyl)-1-(9Z-octadecenoyl)-sn-glycero-3-phosphoethanolamine + H2O = N-(5Z,8Z,11Z,14Z-eicosatetraenoyl)-ethanolamine + 1-(9Z-octadecenoyl)-sn-glycero-3-phosphate + H(+). It carries out the reaction N,1-di-(9Z-octadecenoyl)-sn-glycero-3-phosphoethanolamine + H2O = N-(9Z-octadecenoyl) ethanolamine + 1-(9Z-octadecenoyl)-sn-glycero-3-phosphate + H(+). It catalyses the reaction N-hexadecanoyl-1-(9Z-octadecenoyl)-sn-glycero-3-phosphoethanolamine + H2O = N-hexadecanoylethanolamine + 1-(9Z-octadecenoyl)-sn-glycero-3-phosphate + H(+). The enzyme catalyses a 1-O-alkyl-sn-glycero-3-phosphocholine + H2O = a 1-O-alkyl-sn-glycero-3-phosphate + choline + H(+). The catalysed reaction is 1-O-hexadecyl-sn-glycero-3-phosphocholine + H2O = 1-O-hexadecyl-sn-glycero-3-phosphate + choline + H(+). It carries out the reaction 1-(9Z-octadecenoyl)-sn-glycero-3-phosphocholine + H2O = 1-(9Z-octadecenoyl)-sn-glycero-3-phosphate + choline + H(+). It catalyses the reaction N,1-dihexadecanoyl-sn-glycero-3-phosphoethanolamine + H2O = N-hexadecanoylethanolamine + 1-hexadecanoyl-sn-glycero-3-phosphate + H(+). The enzyme catalyses 1-O-(1Z-octadecenyl)-sn-glycero-3-phospho-(N-5Z,8Z,11Z,14Z-eicosatetraenoyl)-ethanolamine + H2O = 1-O-(1Z-octadecenyl)-sn-glycero-3-phosphate + N-(5Z,8Z,11Z,14Z-eicosatetraenoyl)-ethanolamine + H(+). The catalysed reaction is 1-O-(1Z-octadecenyl)-sn-glycero-3-phospho-(N-9Z-octadecenoyl)-ethanolamine + H2O = 1-O-(1Z-octadecenyl)-sn-glycero-3-phosphate + N-(9Z-octadecenoyl) ethanolamine + H(+). It carries out the reaction 1-O-(1Z-octadecenyl)-sn-glycero-3-phospho-N-hexadecanoyl-ethanolamine + H2O = 1-O-(1Z-octadecenyl)-sn-glycero-3-phosphate + N-hexadecanoylethanolamine + H(+). Its activity is regulated as follows. Lysophospholipase D activity is increased by magnesium and manganese and inhibited by calcium in a concentration dependent manner. Loss of lysophospholipase D activity by addition of EDTA. Hydrolyzes lysoglycerophospholipids to produce lysophosphatidic acid (LPA) and the corresponding amines. Shows a preference for 1-O-alkyl-sn-glycero-3-phosphocholine (lyso-PAF), lysophosphatidylethanolamine (lyso-PE) and lysophosphatidylcholine (lyso-PC). May be involved in bioactive N-acylethanolamine biosynthesis from both N-acyl-lysoplasmenylethanolamin (N-acyl-lysoPlsEt) and N-acyl-lysophosphatidylethanolamin (N-acyl-lysoPE). In addition, hydrolyzes glycerophospho-N-acylethanolamine to N-acylethanolamine. Does not display glycerophosphodiester phosphodiesterase activity, since it cannot hydrolyze either glycerophosphoinositol or glycerophosphocholine. This is Lysophospholipase D GDPD1 from Mus musculus (Mouse).